The chain runs to 505 residues: Probable cytochrome P450 28c1 (505 aa).

Residue Cys444 participates in heme binding.

This sequence belongs to the cytochrome P450 family. The cofactor is heme.

Its subcellular location is the endoplasmic reticulum membrane. It localises to the microsome membrane. May be involved in the metabolism of insect hormones and in the breakdown of synthetic insecticides. This is Probable cytochrome P450 28c1 (Cyp28c1) from Drosophila melanogaster (Fruit fly).